The following is a 417-amino-acid chain: D-amino acid dehydrogenase (417 aa).

Residue 3–17 (AVVLGSGVVGLMSAW) participates in FAD binding.

It belongs to the DadA oxidoreductase family. Requires FAD as cofactor.

The catalysed reaction is a D-alpha-amino acid + A + H2O = a 2-oxocarboxylate + AH2 + NH4(+). In terms of biological role, oxidative deamination of D-amino acids. The chain is D-amino acid dehydrogenase from Vibrio vulnificus (strain YJ016).